The chain runs to 245 residues: Demethylmenaquinone methyltransferase (245 aa).

S-adenosyl-L-methionine contacts are provided by residues T62, D80, 105-106 (DA), and S122.

It belongs to the class I-like SAM-binding methyltransferase superfamily. MenG/UbiE family.

The enzyme catalyses a 2-demethylmenaquinol + S-adenosyl-L-methionine = a menaquinol + S-adenosyl-L-homocysteine + H(+). The protein operates within quinol/quinone metabolism; menaquinone biosynthesis; menaquinol from 1,4-dihydroxy-2-naphthoate: step 2/2. Its function is as follows. Methyltransferase required for the conversion of demethylmenaquinol (DMKH2) to menaquinol (MKH2). The polypeptide is Demethylmenaquinone methyltransferase (Clavibacter sepedonicus (Clavibacter michiganensis subsp. sepedonicus)).